Consider the following 404-residue polypeptide: Serine/threonine transporter SstT (404 aa).

8 helical membrane passes run 17-37, 39-59, 75-95, 138-158, 179-199, 212-232, 287-307, and 313-333; these read IGIG…LTGF, ILGK…VFAL, MTLI…VAVL, ALAT…GLAL, IVVW…FTTI, FLIL…NPLI, IPLG…VLTL, and FGIP…AVSA.

Belongs to the dicarboxylate/amino acid:cation symporter (DAACS) (TC 2.A.23) family.

Its subcellular location is the cell membrane. The catalysed reaction is L-serine(in) + Na(+)(in) = L-serine(out) + Na(+)(out). The enzyme catalyses L-threonine(in) + Na(+)(in) = L-threonine(out) + Na(+)(out). Functionally, involved in the import of serine and threonine into the cell, with the concomitant import of sodium (symport system). This chain is Serine/threonine transporter SstT, found in Streptococcus pyogenes serotype M1.